Reading from the N-terminus, the 727-residue chain is E3 ubiquitin-protein ligase LRSAM1 (727 aa).

LRR repeat units lie at residues 30–51 (ADDI…AFAT), 56–77 (QKKV…SCSL), 82–103 (TIKV…MGQL), 105–126 (VLQV…IGNL), 128–150 (QLQT…GELR), and 151–172 (SLRT…LAHV). Residues 227–248 (GAENTQDSPDGPASRFSREEAE) form a disordered region. Ser234 is subject to Phosphoserine. Coiled coils occupy residues 241–382 (RFSR…NLRQ) and 469–547 (RQIR…QENY). Residues 569-632 (GMERRLVALL…LRRAQDLLAV (64 aa)) enclose the SAM domain. The residue at position 604 (Ser604) is a Phosphoserine. Short sequence motifs (PTAP motif) lie at residues 653-656 (PTAP) and 665-668 (PSAP). The RING-type zinc-finger motif lies at 679–714 (CVVCLEREAQMVFLTCGHVCCCQQCCQPLRTCPLCR).

In terms of assembly, interacts with TSG101. Interacts with PHF23. Interacts with FUS. Post-translationally, ubiquitination promoted by PHF23 leads to proteasomal degradation. Widely expressed.

It is found in the cytoplasm. It carries out the reaction S-ubiquitinyl-[E2 ubiquitin-conjugating enzyme]-L-cysteine + [acceptor protein]-L-lysine = [E2 ubiquitin-conjugating enzyme]-L-cysteine + N(6)-ubiquitinyl-[acceptor protein]-L-lysine.. It participates in protein modification; protein ubiquitination. In terms of biological role, E3 ubiquitin-protein ligase that mediates monoubiquitination of TSG101 at multiple sites, leading to inactivate the ability of TSG101 to sort endocytic (EGF receptors) and exocytic (viral proteins) cargos. Bacterial recognition protein that defends the cytoplasm from invasive pathogens. Localizes to several intracellular bacterial pathogens and generates the bacteria-associated ubiquitin signal leading to autophagy-mediated intracellular bacteria degradation (xenophagy). This chain is E3 ubiquitin-protein ligase LRSAM1, found in Mus musculus (Mouse).